The primary structure comprises 150 residues: Troponin C, isoform 1 (150 aa).

Met-1 carries the N-acetylmethionine modification. EF-hand domains are found at residues 7-42 (DQVQALQKAFNSFDTDDKGFITPDTVGVILRMMGVK), 43-78 (ISDRHLQEVISETDEDGSGEIEFEEFAALAAKFLSE), 83-118 (ALKKELKEAFRIYDRGGNGYITVHTLKEILRELDNK), and 119-150 (LTEDNLDSIIEEVDEDGSGTIDFNEFMKMMNG). Ca(2+)-binding residues include Asp-56, Asp-58, Ser-60, Glu-62, and Glu-67. 5 residues coordinate Ca(2+): Asp-132, Asp-134, Ser-136, Thr-138, and Glu-143.

It belongs to the troponin C family.

Its function is as follows. Troponin is the central regulatory protein of striated muscle contraction. Tn consists of three components: Tn-I which is the inhibitor of actomyosin ATPase, Tn-T which contains the binding site for tropomyosin and Tn-C. The binding of calcium to Tn-C abolishes the inhibitory action of Tn on actin filaments. The protein is Troponin C, isoform 1 of Homarus americanus (American lobster).